The sequence spans 232 residues: Large ribosomal subunit protein uL1 (232 aa).

Belongs to the universal ribosomal protein uL1 family. Part of the 50S ribosomal subunit.

Its function is as follows. Binds directly to 23S rRNA. The L1 stalk is quite mobile in the ribosome, and is involved in E site tRNA release. Functionally, protein L1 is also a translational repressor protein, it controls the translation of the L11 operon by binding to its mRNA. This Coxiella burnetii (strain CbuK_Q154) (Coxiella burnetii (strain Q154)) protein is Large ribosomal subunit protein uL1.